A 1098-amino-acid chain; its full sequence is Gramicidin S synthase 1 (1098 aa).

The 75-residue stretch at 538–612 (APRNEIEETL…QLVHYIKDSK (75 aa)) folds into the Carrier domain. The residue at position 573 (S573) is an O-(pantetheine 4'-phosphoryl)serine.

This sequence belongs to the ATP-dependent AMP-binding enzyme family. In terms of assembly, large multienzyme complex of GrsA and GrsB. Pantetheine 4'-phosphate is required as a cofactor.

The enzyme catalyses L-phenylalanine + ATP + H2O = D-phenylalanine + AMP + diphosphate + H(+). Its pathway is antibiotic biosynthesis; gramicidin S biosynthesis. Functionally, in the first step of peptide synthesis this enzyme activates phenylalanine and racemizes it to the D-isomer. The chain is Gramicidin S synthase 1 (grsA) from Brevibacillus brevis (Bacillus brevis).